The primary structure comprises 293 residues: 33 kDa chaperonin (293 aa).

2 cysteine pairs are disulfide-bonded: Cys237-Cys239 and Cys271-Cys274.

This sequence belongs to the HSP33 family. Under oxidizing conditions two disulfide bonds are formed involving the reactive cysteines. Under reducing conditions zinc is bound to the reactive cysteines and the protein is inactive.

It localises to the cytoplasm. Its function is as follows. Redox regulated molecular chaperone. Protects both thermally unfolding and oxidatively damaged proteins from irreversible aggregation. Plays an important role in the bacterial defense system toward oxidative stress. The polypeptide is 33 kDa chaperonin (Haemophilus influenzae (strain ATCC 51907 / DSM 11121 / KW20 / Rd)).